The sequence spans 216 residues: Cyclin-U4-2 (216 aa).

It belongs to the cyclin family. Cyclin U/P subfamily. Interacts with CDKA-1. Expressed in roots, stems and flowers. Expressed in the shoot apex, leaf primordia and young leaves.

In Arabidopsis thaliana (Mouse-ear cress), this protein is Cyclin-U4-2 (CYCU4-2).